The chain runs to 730 residues: Ribosomal RNA large subunit methyltransferase K/L (730 aa).

In terms of domain architecture, THUMP spans 46–157 (TAYRLCVWSR…RGEAILSLDL (112 aa)). The tract at residues 394 to 418 (GERREAQPEGTEARQQVPQASEPAR) is disordered.

The protein belongs to the methyltransferase superfamily. RlmKL family.

The protein localises to the cytoplasm. It catalyses the reaction guanosine(2445) in 23S rRNA + S-adenosyl-L-methionine = N(2)-methylguanosine(2445) in 23S rRNA + S-adenosyl-L-homocysteine + H(+). It carries out the reaction guanosine(2069) in 23S rRNA + S-adenosyl-L-methionine = N(2)-methylguanosine(2069) in 23S rRNA + S-adenosyl-L-homocysteine + H(+). Specifically methylates the guanine in position 2445 (m2G2445) and the guanine in position 2069 (m7G2069) of 23S rRNA. This chain is Ribosomal RNA large subunit methyltransferase K/L, found in Pseudomonas putida (strain ATCC 47054 / DSM 6125 / CFBP 8728 / NCIMB 11950 / KT2440).